Consider the following 567-residue polypeptide: Potassium-transporting ATPase potassium-binding subunit (567 aa).

The next 11 membrane-spanning stretches (helical) occupy residues 5–25 (GWIQ…PLGG), 64–84 (TTYA…LYML), 136–156 (GLTV…IALI), 179–199 (LYVL…LGVP), 254–274 (ISNM…TNVF), 285–305 (WAIF…CYWA), 332–352 (IAMS…AVIA), 359–376 (ALGG…EIII), 421–441 (MLAV…ASVI), 486–506 (ITIG…AMAI), and 529–549 (LFVG…FFPA).

It belongs to the KdpA family. As to quaternary structure, the system is composed of three essential subunits: KdpA, KdpB and KdpC.

It is found in the cell inner membrane. In terms of biological role, part of the high-affinity ATP-driven potassium transport (or Kdp) system, which catalyzes the hydrolysis of ATP coupled with the electrogenic transport of potassium into the cytoplasm. This subunit binds the periplasmic potassium ions and delivers the ions to the membrane domain of KdpB through an intramembrane tunnel. This chain is Potassium-transporting ATPase potassium-binding subunit, found in Brucella anthropi (strain ATCC 49188 / DSM 6882 / CCUG 24695 / JCM 21032 / LMG 3331 / NBRC 15819 / NCTC 12168 / Alc 37) (Ochrobactrum anthropi).